A 237-amino-acid polypeptide reads, in one-letter code: Mitochondrial inner membrane protease atp23 (237 aa).

Residues 1 to 13 (MSDSQPCSTPSTR) are compositionally biased toward polar residues. A disordered region spans residues 1 to 23 (MSDSQPCSTPSTRGKSDSGYIPG). Histidine 136 contributes to the a divalent metal cation binding site. Glutamate 137 is an active-site residue. Position 140 (histidine 140) interacts with a divalent metal cation.

This sequence belongs to the peptidase M76 family.

The protein localises to the mitochondrion inner membrane. Functionally, has a dual role in the assembly of mitochondrial ATPase. Acts as a protease that removes N-terminal residues of mitochondrial ATPase CF(0) subunit 6 at the intermembrane space side. Also involved in the correct assembly of the membrane-embedded ATPase CF(0) particle, probably mediating association of subunit 6 with the subunit 9 ring. This chain is Mitochondrial inner membrane protease atp23 (atp23), found in Aspergillus fumigatus (strain ATCC MYA-4609 / CBS 101355 / FGSC A1100 / Af293) (Neosartorya fumigata).